The chain runs to 130 residues: Peptide methionine sulfoxide reductase MsrB (130 aa).

Residues 1–122 form the MsrB domain; that stretch reads MKKREDMTEM…NSVSMAFEDS (122 aa). Zn(2+)-binding residues include Cys39, Cys42, Cys88, and Cys91. Catalysis depends on Cys111, which acts as the Nucleophile.

The protein belongs to the MsrB Met sulfoxide reductase family. Zn(2+) is required as a cofactor.

The enzyme catalyses L-methionyl-[protein] + [thioredoxin]-disulfide + H2O = L-methionyl-(R)-S-oxide-[protein] + [thioredoxin]-dithiol. This chain is Peptide methionine sulfoxide reductase MsrB, found in Pasteurella multocida (strain Pm70).